The primary structure comprises 120 residues: Large ribosomal subunit protein bL12 (120 aa).

This sequence belongs to the bacterial ribosomal protein bL12 family. In terms of assembly, homodimer. Part of the ribosomal stalk of the 50S ribosomal subunit. Forms a multimeric L10(L12)X complex, where L10 forms an elongated spine to which 2 to 4 L12 dimers bind in a sequential fashion. Binds GTP-bound translation factors.

Forms part of the ribosomal stalk which helps the ribosome interact with GTP-bound translation factors. Is thus essential for accurate translation. The sequence is that of Large ribosomal subunit protein bL12 from Pseudoalteromonas translucida (strain TAC 125).